The sequence spans 337 residues: MKPYPIKFVSIVIPVYNERQSLPELLRRTEAACEQLDHRFEIVLVDDGSRDDSTDILQRAAERADSPFVAVILNRNYGQHAAIMAGFEQCQGDVVITLDADLQNPPEEIPRLVKLAEQGYDVVGTVRSNRQDSAWRRWPSKLINLAVQRSTGVAMNDYGCMLRAYRRTIVDAMLACRERSTFIPILANSFARHTTEVLVDHAEREHGDSKYSPMRLINLMFDLITCMTTTPLRLLSIIGFSMALLGVLFAALLIVLRLIFGASWAGDGMFVLFAVLFVFTGGQFIGMGLLGEYLGRMYSDVRARPRFFIEKIVRSSSPVATDSIDSSVTPYMNKVAP.

The next 2 helical transmembrane spans lie at 235–255 (LSII…LLIV) and 270–290 (FVLF…MGLL).

It belongs to the glycosyltransferase 2 family.

Its subcellular location is the cell inner membrane. It catalyses the reaction UDP-4-deoxy-4-formamido-beta-L-arabinose + di-trans,octa-cis-undecaprenyl phosphate = 4-deoxy-4-formamido-alpha-L-arabinopyranosyl di-trans,octa-cis-undecaprenyl phosphate + UDP. It functions in the pathway glycolipid biosynthesis; 4-amino-4-deoxy-alpha-L-arabinose undecaprenyl phosphate biosynthesis; 4-amino-4-deoxy-alpha-L-arabinose undecaprenyl phosphate from UDP-4-deoxy-4-formamido-beta-L-arabinose and undecaprenyl phosphate: step 1/2. It participates in bacterial outer membrane biogenesis; lipopolysaccharide biosynthesis. Functionally, catalyzes the transfer of 4-deoxy-4-formamido-L-arabinose from UDP to undecaprenyl phosphate. The modified arabinose is attached to lipid A and is required for resistance to polymyxin and cationic antimicrobial peptides. In Pseudomonas syringae pv. syringae (strain B728a), this protein is Undecaprenyl-phosphate 4-deoxy-4-formamido-L-arabinose transferase.